A 100-amino-acid chain; its full sequence is Envelope glycoprotein N (100 aa).

A signal peptide spans 1–27 (MLSTRFVTLAILACLLVVLGLARGAGG). Over 28 to 63 (DPGVKQRIDVAREEERRDFWHAACSGHGFPITTPST) the chain is Virion surface. A helical membrane pass occupies residues 64-84 (AAILFYVSLLAVGVAVACQAY). Over 85–100 (RAVLRIVTLEMLQHLH) the chain is Intravirion.

Belongs to the herpesviridae glycoprotein N family. In terms of assembly, interacts (via N-terminus) with gM (via N-terminus). The gM-gN heterodimer forms the gCII complex.

The protein resides in the virion membrane. Its subcellular location is the host membrane. It localises to the host Golgi apparatus. The protein localises to the host trans-Golgi network. Functionally, envelope glycoprotein necessary for proper maturation of gM and modulation of its membrane fusion activity. Also plays a critical role in virion morphogenesis. In Equus caballus (Horse), this protein is Envelope glycoprotein N.